The primary structure comprises 940 residues: Antiviral innate immune response receptor RIG-I (940 aa).

2 consecutive CARD domains span residues 1 to 87 and 92 to 172; these read MTAE…GLCE and WDFQ…KTLK. Glycyl lysine isopeptide (Lys-Gly) (interchain with G-Cter in ubiquitin) cross-links involve residues Lys-48, Lys-96, Lys-154, Lys-164, Lys-172, and Lys-190. An interaction with ZC3HAV1 region spans residues 219-928; that stretch reads ENQNLSQNSC…LSFDAAEMAG (710 aa). The region spanning 249–428 is the Helicase ATP-binding domain; that stretch reads ALPAQNGKNT…AEATEYICKL (180 aa). 262–269 lines the ATP pocket; the sequence is APTGCGKT. The DECH box motif lies at 370–373; that stretch reads DECH. The Helicase C-terminal domain maps to 613–779; sequence KLRDLCFILQ…ILQTWDEAVF (167 aa). Residues 738–928 form a mediates interaction with RNF135 region; the sequence is GSKCFLLTAN…LSFDAAEMAG (191 aa). Thr-773 is modified (phosphothreonine; by CK2). In terms of domain architecture, RLR CTR spans 795–928; sequence DNQGKPEPVP…LSFDAAEMAG (134 aa). Cys-813 serves as a coordination point for Zn(2+). A Glycyl lysine isopeptide (Lys-Gly) (interchain with G-Cter in ubiquitin) cross-link involves residue Lys-815. Position 816 (Cys-816) interacts with Zn(2+). Lys-861 carries the post-translational modification N6-acetyllysine. Residues Cys-867 and Cys-872 each contribute to the Zn(2+) site. N6-acetyllysine is present on Lys-912.

This sequence belongs to the helicase family. RLR subfamily. Monomer; maintained as a monomer in an autoinhibited state. Upon binding of viral RNAs and conformational shift, homooligomerizes and forms filaments on these molecules. Interacts (via tandem CARD domain) with MAVS/IPS1 promoting its filamentation. Interacts with DHX58/LGP2, IKBKE, TBK1 and STING1. Interacts (via CARD domain) with TRIM25 (via SPRY domain). Interacts (double-stranded RNA-bound oligomeric form) with RNF135 (homodimer); involved in RNA length-dependent activation of the RIG-I signaling pathway. Interacts with CYLD. Interacts with NLRC5; blocks the interaction of MAVS/IPS1 to RIGI. Interacts with SRC. Interacts with DDX60. Interacts with ZC3HAV1 (via zinc-fingers) in an RNA-dependent manner. Interacts (via tandem CARD domain) with SEC14L1; the interaction is direct and impairs the interaction of RIGI with MAVS/IPS1. Interacts with VCP/p97; interaction is direct and allows the recruitment of RNF125 and subsequent ubiquitination and degradation. Interacts with NOP53; may regulate RIGI through USP15-mediated 'Lys-63'-linked deubiquitination. Interacts with SIGLEC10, CBL and PTPN11; within a negative feedback loop leading to RIGI degradation. Interacts with LRRC25. Interacts with ZCCHC3; leading to activation of RIGI. Interacts with RNF123. Interacts with UBE2D3 and UBE2N; E2 ubiquitin ligases involved in RNF135-mediated ubiquitination of RIGI and activation of the RIG-I signaling pathway. Interacts with IFIT3. Interacts with DDX3X. Interacts with RTN3. Interacts with ARL16; this interaction is GTP-dependent and induced upon viral infection; this interaction suppresses the RNA sensing activity of RIGI. Interacts with DHX16; this interaction enhances RIGI-mediated antiviral response. Interacts with IRGM; promoting RIGI degradation. Interacts with IFI6; this interaction inhibits RIGI activation. Interacts with ECSIT; this interaction bridges RIGI to the MAVS complex at the mitochondrion. Interacts with YWHAE; this interaction drives RIGI at the mitochondrion. In terms of processing, phosphorylated in resting cells and dephosphorylated in RNA virus-infected cells. Phosphorylation at Thr-773 results in inhibition of its activity while dephosphorylation at these sites results in its activation. Post-translationally, ISGylated. Conjugated to ubiquitin-like protein ISG15 upon IFN-beta stimulation. ISGylation negatively regulates its function in antiviral signaling response. Sumoylated, probably by MUL1; inhibiting its polyubiquitination. In terms of processing, acetylated in response to RNA virus infection. Deacetylated by HDAC6 in the presence of viral mRNAs which is required for detection of viral RNA by RIGI. Post-translationally, ubiquitinated. 'Lys-63' ubiquitination by RNF135, which occurs after RNA-binding and homodimerization, releases the autoinhibition of the CARD domains by the RLR CTR domain, an essential step in the activation of the RIG-I signaling pathway. Also ubiquitinated by TRIM4. Also undergoes 'Lys-48' ubiquitination by RNF125 that leads to proteasomal degradation. 'Lys-48' ubiquitination follows viral infection and is enhanced by 'Lys-63'-linked ubiquitination of the CARD domains that promotes interaction with VCP/p97 and subsequent recruitment of RNF125. Within a negative feedback loop involving SIGLEC10 and PTPN11, 'Lys-48' ubiquitination at Lys-815 by CBL also elicits the proteasomal degradation of RIGI. Deubiquitinated by CYLD, a protease that selectively cleaves 'Lys-63'-linked ubiquitin chains. Also probably deubiquitinated by USP17L2/USP17 that cleaves 'Lys-48'- and 'Lys-63'-linked ubiquitin chains and positively regulates the receptor. Ubiquitinated by TRIM40 via 'Lys-48'-linked ubiquitination; leading to proteasomal degradation. Deubiquitinated by USP27X that cleaves 'Lys-63'-linked ubiquitin chains and inhibits the innate immune receptor activity. Deubiquitinated by USP3 that also cleaves 'Lys-63'-linked ubiquitin chains and inhibits the innate immune receptor activity. Degraded via selective autophagy following interaction with IRGM. IRGM promotes RIGI recruitment to autophagosome membranes, promoting its SQSTM1/p62-dependent autophagic degradation. In terms of tissue distribution, ubiquitously expressed, with highest levels in spleen, liver, intestine and heart. Up-regulated in tracheobronchial lymph node and tonsils during porcine reproductive and respiratory syndrome virus (PRRSV) infection.

Its subcellular location is the cytoplasm. The protein resides in the cell projection. It localises to the ruffle membrane. The protein localises to the cytoskeleton. It is found in the cell junction. Its subcellular location is the tight junction. The enzyme catalyses ATP + H2O = ADP + phosphate + H(+). Innate immune receptor that senses cytoplasmic viral nucleic acids and activates a downstream signaling cascade leading to the production of type I interferons and pro-inflammatory cytokines. Forms a ribonucleoprotein complex with viral RNAs on which it homooligomerizes to form filaments. The homooligomerization allows the recruitment of RNF135 an E3 ubiquitin-protein ligase that activates and amplifies the RIG-I-mediated antiviral signaling in an RNA length-dependent manner through ubiquitination-dependent and -independent mechanisms. Upon activation, associates with mitochondria antiviral signaling protein (MAVS/IPS1) that activates the IKK-related kinases TBK1 and IKBKE which in turn phosphorylate the interferon regulatory factors IRF3 and IRF7, activating transcription of antiviral immunological genes including the IFN-alpha and IFN-beta interferons. Ligands include: 5'-triphosphorylated ssRNA and dsRNA and short dsRNA (&lt;1 kb in length). In addition to the 5'-triphosphate moiety, blunt-end base pairing at the 5'-end of the RNA is very essential. Overhangs at the non-triphosphorylated end of the dsRNA RNA have no major impact on its activity. A 3'overhang at the 5'triphosphate end decreases and any 5'overhang at the 5' triphosphate end abolishes its activity. Detects both positive and negative strand RNA viruses including members of the families Paramyxoviridae, Rhabdoviridae: vesicular stomatitis virus (VSV) Orthomyxoviridae: influenza A and B virus, Flaviviridae: Japanese encephalitis virus (JEV). It also detects rotavirus and reovirus. Also involved in antiviral signaling in response to viruses containing a dsDNA genome. Detects dsRNA produced from non-self dsDNA by RNA polymerase III. May play important roles in granulocyte production and differentiation, bacterial phagocytosis and in the regulation of cell migration. The chain is Antiviral innate immune response receptor RIG-I from Sus scrofa (Pig).